Here is a 398-residue protein sequence, read N- to C-terminus: 8-amino-7-oxononanoate synthase (398 aa).

Substrate contacts are provided by R22 and R29. 109-110 contacts pyridoxal 5'-phosphate; that stretch reads GW. Substrate is bound at residue H141. Residues S189, 214–217, and 242–245 each bind pyridoxal 5'-phosphate; these read DEAH and TFSK. K245 bears the N6-(pyridoxal phosphate)lysine mark. Position 359 (T359) interacts with substrate.

It belongs to the class-II pyridoxal-phosphate-dependent aminotransferase family. BioF subfamily. As to quaternary structure, homodimer. Pyridoxal 5'-phosphate serves as cofactor.

The catalysed reaction is 6-carboxyhexanoyl-[ACP] + L-alanine + H(+) = (8S)-8-amino-7-oxononanoate + holo-[ACP] + CO2. It functions in the pathway cofactor biosynthesis; biotin biosynthesis. Functionally, catalyzes the decarboxylative condensation of pimeloyl-[acyl-carrier protein] and L-alanine to produce 8-amino-7-oxononanoate (AON), [acyl-carrier protein], and carbon dioxide. In Gluconacetobacter diazotrophicus (strain ATCC 49037 / DSM 5601 / CCUG 37298 / CIP 103539 / LMG 7603 / PAl5), this protein is 8-amino-7-oxononanoate synthase.